We begin with the raw amino-acid sequence, 523 residues long: Succinate-semialdehyde dehydrogenase, mitochondrial (523 aa).

Residues 1–35 (MATCFLLRSFWAARPALPPPGRFRPEPAGTPRRSY) constitute a mitochondrion transit peptide. Lys-74 carries the post-translational modification N6-acetyllysine. N6-acetyllysine; alternate is present on Lys-114. Position 114 is an N6-succinyllysine; alternate (Lys-114). Residue Lys-123 is modified to N6-succinyllysine. Residue Lys-128 is modified to N6-acetyllysine. Residue Lys-172 is modified to N6-succinyllysine. NAD(+) is bound by residues Arg-201 and 216-219 (KPAE). Position 201 (Arg-201) interacts with substrate. Lys-253 is modified (N6-acetyllysine; alternate). An N6-succinyllysine; alternate modification is found at Lys-253. 272–277 (GSTATG) lines the NAD(+) pocket. Glu-294 acts as the Proton acceptor in catalysis. Arg-322 contacts substrate. Cys-328 acts as the Nucleophile in catalysis. Residues Cys-328 and Cys-330 are joined by a disulfide bond. At Lys-347 the chain carries N6-acetyllysine; alternate. Position 347 is an N6-succinyllysine; alternate (Lys-347). Residue Lys-353 is modified to N6-acetyllysine. Position 390 is an N6-succinyllysine (Lys-390). Lys-399 carries the N6-acetyllysine modification. Position 403 is a phosphoserine (Ser-403). A substrate-binding site is contributed by Ser-486. A Phosphoserine modification is found at Ser-487.

The protein belongs to the aldehyde dehydrogenase family. As to quaternary structure, homotetramer.

The protein localises to the mitochondrion. It catalyses the reaction succinate semialdehyde + NAD(+) + H2O = succinate + NADH + 2 H(+). The protein operates within amino-acid degradation; 4-aminobutanoate degradation. Redox-regulated. Inhibited under oxydizing conditions. Its function is as follows. Catalyzes one step in the degradation of the inhibitory neurotransmitter gamma-aminobutyric acid (GABA). This Mus musculus (Mouse) protein is Succinate-semialdehyde dehydrogenase, mitochondrial (Aldh5a1).